Reading from the N-terminus, the 156-residue chain is Ribosome maturation factor RimP (156 aa).

Belongs to the RimP family.

It localises to the cytoplasm. Required for maturation of 30S ribosomal subunits. The sequence is that of Ribosome maturation factor RimP from Bacillus mycoides (strain KBAB4) (Bacillus weihenstephanensis).